An 85-amino-acid polypeptide reads, in one-letter code: Probable Thioredoxin (85 aa).

In terms of domain architecture, Glutaredoxin spans Val2–Glu85. Residues Cys13 and Cys16 are joined by a disulfide bond.

It belongs to the glutaredoxin family.

It is found in the cytoplasm. Its function is as follows. Acts to maintain redox homeostasis; functions as a protein disulfide reductase. The polypeptide is Probable Thioredoxin (Methanothermobacter thermautotrophicus (strain ATCC 29096 / DSM 1053 / JCM 10044 / NBRC 100330 / Delta H) (Methanobacterium thermoautotrophicum)).